A 308-amino-acid chain; its full sequence is Ribosomal RNA small subunit methyltransferase H (308 aa).

S-adenosyl-L-methionine is bound by residues 38–40 (GGH), Asp58, Phe82, Asp99, and Gln106.

Belongs to the methyltransferase superfamily. RsmH family.

The protein resides in the cytoplasm. The catalysed reaction is cytidine(1402) in 16S rRNA + S-adenosyl-L-methionine = N(4)-methylcytidine(1402) in 16S rRNA + S-adenosyl-L-homocysteine + H(+). In terms of biological role, specifically methylates the N4 position of cytidine in position 1402 (C1402) of 16S rRNA. The polypeptide is Ribosomal RNA small subunit methyltransferase H (Acidovorax ebreus (strain TPSY) (Diaphorobacter sp. (strain TPSY))).